We begin with the raw amino-acid sequence, 95 residues long: Co-chaperonin GroES (95 aa).

The protein belongs to the GroES chaperonin family. Heptamer of 7 subunits arranged in a ring. Interacts with the chaperonin GroEL.

Its subcellular location is the cytoplasm. In terms of biological role, together with the chaperonin GroEL, plays an essential role in assisting protein folding. The GroEL-GroES system forms a nano-cage that allows encapsulation of the non-native substrate proteins and provides a physical environment optimized to promote and accelerate protein folding. GroES binds to the apical surface of the GroEL ring, thereby capping the opening of the GroEL channel. The chain is Co-chaperonin GroES from Neisseria meningitidis serogroup C (strain 053442).